Reading from the N-terminus, the 125-residue chain is MKTAATIALFCAGGGLTRYYLSGWIYGLLGRAFPYGTLVVNIIGAYCIGLIMELGLRSTMLSDTLRIGLTVGFMGGLTTFSTFSYETFKLLEDGQFVMAFTNVLASVAVCLLCTWLGIITVRSLA.

The next 4 membrane-spanning stretches (helical) occupy residues 9 to 29, 32 to 52, 67 to 87, and 99 to 119; these read LFCA…YGLL, AFPY…GLIM, IGLT…SYET, and AFTN…LGII. Positions 75 and 78 each coordinate Na(+).

Belongs to the fluoride channel Fluc/FEX (TC 1.A.43) family.

It localises to the cell inner membrane. The enzyme catalyses fluoride(in) = fluoride(out). With respect to regulation, na(+) is not transported, but it plays an essential structural role and its presence is essential for fluoride channel function. Its function is as follows. Fluoride-specific ion channel. Important for reducing fluoride concentration in the cell, thus reducing its toxicity. The chain is Fluoride-specific ion channel FluC from Trichlorobacter lovleyi (strain ATCC BAA-1151 / DSM 17278 / SZ) (Geobacter lovleyi).